The primary structure comprises 796 residues: Protein translocase subunit SecA 2 (796 aa).

ATP contacts are provided by residues Gln-84, 102-106, and Asp-496; that span reads GEGKT.

The protein belongs to the SecA family. As to quaternary structure, monomer and homodimer. Part of the essential Sec protein translocation apparatus which comprises SecA, SecYEG and auxiliary proteins SecDF. Other proteins may also be involved.

Its subcellular location is the cell membrane. It localises to the cytoplasm. The catalysed reaction is ATP + H2O + cellular proteinSide 1 = ADP + phosphate + cellular proteinSide 2.. In terms of biological role, part of the Sec protein translocase complex. Interacts with the SecYEG preprotein conducting channel. Has a central role in coupling the hydrolysis of ATP to the transfer of proteins into and across the cell membrane, serving as an ATP-driven molecular motor driving the stepwise translocation of polypeptide chains across the membrane. This is Protein translocase subunit SecA 2 from Staphylococcus epidermidis (strain ATCC 12228 / FDA PCI 1200).